The chain runs to 368 residues: Carbamoyl phosphate synthase small chain (368 aa).

The tract at residues 1 to 178 (MKAVLGLEDG…GAAGAWKGSG (178 aa)) is CPSase. Residues S45, G230, and G232 each contribute to the L-glutamine site. The region spanning 182–368 (HAVVVDLGIK…KVVKVLGGGL (187 aa)) is the Glutamine amidotransferase type-1 domain. C257 functions as the Nucleophile in the catalytic mechanism. Residues F258, Q261, N299, G301, and Y302 each coordinate L-glutamine. Active-site residues include H342 and E344.

The protein belongs to the CarA family. As to quaternary structure, composed of two chains; the small (or glutamine) chain promotes the hydrolysis of glutamine to ammonia, which is used by the large (or ammonia) chain to synthesize carbamoyl phosphate. Tetramer of heterodimers (alpha,beta)4.

It catalyses the reaction hydrogencarbonate + L-glutamine + 2 ATP + H2O = carbamoyl phosphate + L-glutamate + 2 ADP + phosphate + 2 H(+). The enzyme catalyses L-glutamine + H2O = L-glutamate + NH4(+). It functions in the pathway amino-acid biosynthesis; L-arginine biosynthesis; carbamoyl phosphate from bicarbonate: step 1/1. Its pathway is pyrimidine metabolism; UMP biosynthesis via de novo pathway; (S)-dihydroorotate from bicarbonate: step 1/3. Its function is as follows. Small subunit of the glutamine-dependent carbamoyl phosphate synthetase (CPSase). CPSase catalyzes the formation of carbamoyl phosphate from the ammonia moiety of glutamine, carbonate, and phosphate donated by ATP, constituting the first step of 2 biosynthetic pathways, one leading to arginine and/or urea and the other to pyrimidine nucleotides. The small subunit (glutamine amidotransferase) binds and cleaves glutamine to supply the large subunit with the substrate ammonia. The protein is Carbamoyl phosphate synthase small chain of Methanosarcina mazei (strain ATCC BAA-159 / DSM 3647 / Goe1 / Go1 / JCM 11833 / OCM 88) (Methanosarcina frisia).